A 188-amino-acid chain; its full sequence is GTP-dependent dephospho-CoA kinase (188 aa).

5 residues coordinate GTP: D43, V44, D62, E121, and D144.

Belongs to the GTP-dependent DPCK family.

It catalyses the reaction 3'-dephospho-CoA + GTP = GDP + CoA + H(+). It functions in the pathway cofactor biosynthesis; coenzyme A biosynthesis. Catalyzes the GTP-dependent phosphorylation of the 3'-hydroxyl group of dephosphocoenzyme A to form coenzyme A (CoA). In Methanococcoides burtonii (strain DSM 6242 / NBRC 107633 / OCM 468 / ACE-M), this protein is GTP-dependent dephospho-CoA kinase.